The primary structure comprises 317 residues: Ribosomal protein L11 methyltransferase (317 aa).

4 residues coordinate S-adenosyl-L-methionine: threonine 158, glycine 179, aspartate 201, and asparagine 244.

This sequence belongs to the methyltransferase superfamily. PrmA family.

It is found in the cytoplasm. The enzyme catalyses L-lysyl-[protein] + 3 S-adenosyl-L-methionine = N(6),N(6),N(6)-trimethyl-L-lysyl-[protein] + 3 S-adenosyl-L-homocysteine + 3 H(+). Methylates ribosomal protein L11. This Streptococcus pyogenes serotype M3 (strain ATCC BAA-595 / MGAS315) protein is Ribosomal protein L11 methyltransferase.